A 304-amino-acid chain; its full sequence is Protease HtpX homolog (304 aa).

2 helical membrane passes run 14–34 and 39–59; these read IFIILGFFIFVLMVGAAIGII and YLNGLILAAVIGAFYILIMVM. Zn(2+) is bound at residue His144. Glu145 is an active-site residue. Position 148 (His148) interacts with Zn(2+). The next 2 membrane-spanning stretches (helical) occupy residues 159–179 and 202–222; these read IAIALVAVIAILSDLAMRMIF and AIIYIVALIFVILAPIIATAI. Residue Glu231 participates in Zn(2+) binding.

This sequence belongs to the peptidase M48B family. Zn(2+) serves as cofactor.

It is found in the cell membrane. This is Protease HtpX homolog from Listeria monocytogenes serotype 4b (strain CLIP80459).